We begin with the raw amino-acid sequence, 891 residues long: Extended synaptotagmin-3 (891 aa).

The disordered stretch occupies residues 1–30 (MQPEEPCAPSAPGGPDVPERGQRSRDPGPR). Over 1-32 (MQPEEPCAPSAPGGPDVPERGQRSRDPGPRLS) the chain is Cytoplasmic. Over residues 17–28 (VPERGQRSRDPG) the composition is skewed to basic and acidic residues. Residues 33-53 (GQLLPELYSFVARVLFYLAPV) form a helical membrane-spanning segment. A topological domain (lumenal) is located at residue Y54. Residues 55–75 (LAGYLGLSVTWLLLGALLWMW) form a helical membrane-spanning segment. At 76–891 (WRRNRRGKLG…ELTADGQPRS (816 aa)) the chain is on the cytoplasmic side. Positions 118-295 (DVERVEWANK…LPNRVTVPVK (178 aa)) constitute an SMP-LTD domain. 2 consecutive C2 domains span residues 292–412 (VPVK…DEWF) and 430–570 (SLLT…QLDH). Positions 325, 326, 336, 383, 384, 385, 387, 389, and 390 each coordinate Ca(2+). The disordered stretch occupies residues 652–711 (SAATTDPEPMPEPQGPGPEPKGKDSARGLCESPGKKKNPATTFLTVPGLHSPGPIKSPRP). Pro residues predominate over residues 659–670 (EPMPEPQGPGPE). In terms of domain architecture, C2 3 spans 759 to 881 (RLGEIQLTVR…DLIKGFSQWY (123 aa)). The tract at residues 806-813 (RRWASRKK) is required for phosphatidylinositol 4,5-bisphosphate-dependent location at the cell membrane.

It belongs to the extended synaptotagmin family.

The protein localises to the cell membrane. The protein resides in the endoplasmic reticulum membrane. Its function is as follows. Tethers the endoplasmic reticulum to the cell membrane and promotes the formation of appositions between the endoplasmic reticulum and the cell membrane. Binds glycerophospholipids in a barrel-like domain and may play a role in cellular lipid transport. This Mus musculus (Mouse) protein is Extended synaptotagmin-3 (Esyt3).